The following is a 183-amino-acid chain: NADH-ubiquinone oxidoreductase 20.8 kDa subunit (183 aa).

CHCH domains lie at 44–87 (GARC…IADI) and 88–130 (NKSC…LGLK). 4 consecutive short sequence motifs (cx9C motif) follow at residues 47–57 (CRDYNDDFMQC), 69–79 (CLKEGRRVTRC), 91–101 (CLEEFRKHWTC), and 112–122 (CRPAEWKLNKC). Disulfide bonds link C47–C79, C57–C69, C91–C122, and C101–C112. Residues 161–183 (EPFVPPTQTGDNNKAPAAASSSS) are disordered.

This sequence belongs to the complex I NDUFA8 subunit family. In terms of assembly, complex I is composed of about 40 different subunits. This is a component of the hydrophobic fraction. Iron-sulfur cluster is required as a cofactor.

It localises to the mitochondrion inner membrane. Functionally, accessory subunit of the mitochondrial membrane respiratory chain NADH dehydrogenase (Complex I), that is believed not to be involved in catalysis. Complex I functions in the transfer of electrons from NADH to the respiratory chain. The immediate electron acceptor for the enzyme is believed to be ubiquinone. The protein is NADH-ubiquinone oxidoreductase 20.8 kDa subunit of Neurospora crassa (strain ATCC 24698 / 74-OR23-1A / CBS 708.71 / DSM 1257 / FGSC 987).